The following is a 123-amino-acid chain: Small ribosomal subunit protein uS12 (123 aa).

Residue Asp-89 is modified to 3-methylthioaspartic acid.

The protein belongs to the universal ribosomal protein uS12 family. Part of the 30S ribosomal subunit. Contacts proteins S8 and S17. May interact with IF1 in the 30S initiation complex.

Its function is as follows. With S4 and S5 plays an important role in translational accuracy. Functionally, interacts with and stabilizes bases of the 16S rRNA that are involved in tRNA selection in the A site and with the mRNA backbone. Located at the interface of the 30S and 50S subunits, it traverses the body of the 30S subunit contacting proteins on the other side and probably holding the rRNA structure together. The combined cluster of proteins S8, S12 and S17 appears to hold together the shoulder and platform of the 30S subunit. In Syntrophotalea carbinolica (strain DSM 2380 / NBRC 103641 / GraBd1) (Pelobacter carbinolicus), this protein is Small ribosomal subunit protein uS12.